The chain runs to 592 residues: Signal peptide peptidase-like 2B (592 aa).

An N-terminal signal peptide occupies residues 1–25 (MAAAVAAALARLLAAFLLLAAQVAC). At 26–174 (EYGMVHVVSQ…APKEPVLDYN (149 aa)) the chain is on the lumenal side. The 79-residue stretch at 71 to 149 (TASLLCSAAD…VALLSYKDML (79 aa)) folds into the PA domain. N-linked (GlcNAc...) asparagine glycosylation is found at Asn-97 and Asn-129. Residues 175–195 (MVIIFIMAVGTVAIGGYWAGS) form a helical membrane-spanning segment. The Cytoplasmic segment spans residues 196 to 221 (RDVKKRYMKHKRDDGPEKQEDEAVDV). A helical membrane pass occupies residues 222–244 (TPVMTCVFVVMCCSMLVLLYYFY). The Lumenal portion of the chain corresponds to 245-248 (DLLV). Residues 249–271 (YVVIGIFCLASATGLYSCLAPCV) traverse the membrane as a helical segment. The Cytoplasmic portion of the chain corresponds to 272-293 (RRLPFGKCRIPNNSLPYFHKRP). A helical transmembrane segment spans residues 294–314 (QARMLLLALFCVAVSVVWGVF). At 315–319 (RNEDQ) the chain is on the lumenal side. Residues 320 to 340 (WAWVLQDALGIAFCLYMLKTI) traverse the membrane as a helical segment. The Cytoplasmic segment spans residues 341–348 (RLPTFKAC). Residues 349–369 (TLLLLVLFLYDIFFVFITPFL) form a helical membrane-spanning segment. Asp-359 is an active-site residue. The Lumenal segment spans residues 370–412 (TKSGSSIMVEVATGPSDSATREKLPMVLKVPRLNSSPLALCDR). Residues 413 to 433 (PFSLLGFGDILVPGLLVAYCH) form a helical membrane-spanning segment. Residue Asp-421 is part of the active site. At 434–445 (RFDIQVQSSRVY) the chain is on the cytoplasmic side. Residues 446-466 (FVACTIAYGVGLLVTFVALAL) traverse the membrane as a helical segment. The Lumenal portion of the chain corresponds to 467–470 (MQRG). Residues 471-491 (QPALLYLVPCTLVTSCAVALW) form a helical membrane-spanning segment. The short motif at 472-474 (PAL) is the PAL element. Over 492 to 592 (RRELGVFWTG…SPVTQPGASA (101 aa)) the chain is Cytoplasmic. The span at 512–524 (PWAPAPADGPQPP) shows a compositional bias: pro residues. Residues 512–592 (PWAPAPADGP…SPVTQPGASA (81 aa)) are disordered. Residues 580–592 (AQPSPVTQPGASA) are compositionally biased toward polar residues.

It belongs to the peptidase A22B family. As to quaternary structure, monomer. Homodimer. Interacts with ITM2B. Interacts with TNF. Interacts with the simian foamy virus envelope glycoprotein gp130 and its processed leader peptide gp18LP; preferentially interacts with the leader peptide gp18LP. In terms of processing, glycosylated. As to expression, expressed predominantly in adrenal cortex and mammary gland.

The protein resides in the cell membrane. It localises to the golgi apparatus membrane. Its subcellular location is the lysosome membrane. The protein localises to the endosome membrane. It is found in the membrane. Its function is as follows. Intramembrane-cleaving aspartic protease (I-CLiP) that cleaves type II membrane signal peptides in the hydrophobic plane of the membrane. Functions in ITM2B and TNF processing. Catalyzes the intramembrane cleavage of the anchored fragment of shed TNF-alpha (TNF), which promotes the release of the intracellular domain (ICD) for signaling to the nucleus. May play a role in the regulation of innate and adaptive immunity. Catalyzes the intramembrane cleavage of the simian foamy virus processed leader peptide gp18 of the envelope glycoprotein gp130 dependently of prior ectodomain shedding by furin or furin-like proprotein convertase (PC)-mediated cleavage proteolysis. This Homo sapiens (Human) protein is Signal peptide peptidase-like 2B.